Here is a 283-residue protein sequence, read N- to C-terminus: Tropomyosin (283 aa).

The stretch at 1–283 (MDAIKKKMQA…LDSAFVELIL (283 aa)) forms a coiled coil.

This sequence belongs to the tropomyosin family. Homodimer.

Its function is as follows. Tropomyosin, in association with the troponin complex, plays a central role in the calcium dependent regulation of muscle contraction. In Locusta migratoria (Migratory locust), this protein is Tropomyosin.